The following is a 918-amino-acid chain: Valine--tRNA ligase (918 aa).

The short motif at 50 to 60 is the 'HIGH' region element; it reads PNVTGSLHMGH. The short motif at 548–552 is the 'KMSKS' region element; it reads KMSKS. Lysine 551 lines the ATP pocket. A coiled-coil region spans residues 849–883; that stretch reads NDFVNLEALKDRLTKDLKKVNSDIETLNKRISNKN.

This sequence belongs to the class-I aminoacyl-tRNA synthetase family. ValS type 1 subfamily. As to quaternary structure, monomer.

The protein resides in the cytoplasm. It catalyses the reaction tRNA(Val) + L-valine + ATP = L-valyl-tRNA(Val) + AMP + diphosphate. In terms of biological role, catalyzes the attachment of valine to tRNA(Val). As ValRS can inadvertently accommodate and process structurally similar amino acids such as threonine, to avoid such errors, it has a 'posttransfer' editing activity that hydrolyzes mischarged Thr-tRNA(Val) in a tRNA-dependent manner. In Prochlorococcus marinus subsp. pastoris (strain CCMP1986 / NIES-2087 / MED4), this protein is Valine--tRNA ligase.